The primary structure comprises 185 residues: ATP-dependent protease subunit HslV (185 aa).

The active site involves threonine 12. Positions 168, 171, and 174 each coordinate Na(+).

This sequence belongs to the peptidase T1B family. HslV subfamily. As to quaternary structure, a double ring-shaped homohexamer of HslV is capped on each side by a ring-shaped HslU homohexamer. The assembly of the HslU/HslV complex is dependent on binding of ATP.

Its subcellular location is the cytoplasm. The enzyme catalyses ATP-dependent cleavage of peptide bonds with broad specificity.. Its activity is regulated as follows. Allosterically activated by HslU binding. Protease subunit of a proteasome-like degradation complex believed to be a general protein degrading machinery. This Dinoroseobacter shibae (strain DSM 16493 / NCIMB 14021 / DFL 12) protein is ATP-dependent protease subunit HslV.